Reading from the N-terminus, the 826-residue chain is Zinc phosphodiesterase ELAC protein 2 (826 aa).

The N-terminal 16 residues, 1–16 (MWALCSLLRSATGRTM), are a transit peptide targeting the mitochondrion. The span at 15-27 (TMSQGRTISQGSA) shows a compositional bias: polar residues. 2 disordered regions span residues 15–53 (TMSQ…GSSG) and 187–231 (SEQR…VSQR). Phosphoserine occurs at positions 199, 208, 212, 229, 618, and 736. A compositionally biased stretch (basic and acidic residues) spans 208 to 224 (SPERSSDSESNESEPHL). Residues 798–826 (ALTDDLEDGEPQQKRAHTEEPQSKKVRAQ) are disordered. The span at 808–820 (PQQKRAHTEEPQS) shows a compositional bias: basic and acidic residues.

It belongs to the RNase Z family. Homodimer. Interacts with PTCD1. Zn(2+) serves as cofactor.

It is found in the mitochondrion. The protein localises to the mitochondrion matrix. The protein resides in the mitochondrion nucleoid. It localises to the nucleus. It carries out the reaction Endonucleolytic cleavage of RNA, removing extra 3' nucleotides from tRNA precursor, generating 3' termini of tRNAs. A 3'-hydroxy group is left at the tRNA terminus and a 5'-phosphoryl group is left at the trailer molecule.. Zinc phosphodiesterase, which displays mitochondrial tRNA 3'-processing endonuclease activity. Involved in tRNA maturation, by removing a 3'-trailer from precursor tRNA. Associates with mitochondrial DNA complexes at the nucleoids to initiate RNA processing and ribosome assembly. The chain is Zinc phosphodiesterase ELAC protein 2 (ELAC2) from Macaca fascicularis (Crab-eating macaque).